Consider the following 361-residue polypeptide: Probable dual-specificity RNA methyltransferase RlmN (361 aa).

Residue Glu99 is the Proton acceptor of the active site. One can recognise a Radical SAM core domain in the interval Gly105 to Pro342. Cysteines 112 and 347 form a disulfide. Residues Cys119, Cys123, and Cys126 each coordinate [4Fe-4S] cluster. S-adenosyl-L-methionine contacts are provided by residues Gly171–Glu172, Ser204, Ser227–His229, and Asn304. Cys347 acts as the S-methylcysteine intermediate in catalysis.

Belongs to the radical SAM superfamily. RlmN family. It depends on [4Fe-4S] cluster as a cofactor.

It is found in the cytoplasm. The catalysed reaction is adenosine(2503) in 23S rRNA + 2 reduced [2Fe-2S]-[ferredoxin] + 2 S-adenosyl-L-methionine = 2-methyladenosine(2503) in 23S rRNA + 5'-deoxyadenosine + L-methionine + 2 oxidized [2Fe-2S]-[ferredoxin] + S-adenosyl-L-homocysteine. The enzyme catalyses adenosine(37) in tRNA + 2 reduced [2Fe-2S]-[ferredoxin] + 2 S-adenosyl-L-methionine = 2-methyladenosine(37) in tRNA + 5'-deoxyadenosine + L-methionine + 2 oxidized [2Fe-2S]-[ferredoxin] + S-adenosyl-L-homocysteine. In terms of biological role, specifically methylates position 2 of adenine 2503 in 23S rRNA and position 2 of adenine 37 in tRNAs. The polypeptide is Probable dual-specificity RNA methyltransferase RlmN (Chlorobium luteolum (strain DSM 273 / BCRC 81028 / 2530) (Pelodictyon luteolum)).